The following is a 714-amino-acid chain: Elongation factor G-like protein (714 aa).

The region spanning Gly21–Met289 is the tr-type G domain. The segment at Gly30–Thr37 is G1. Gly30–Thr37 serves as a coordination point for GTP. Residues Gln73–Gly77 form a G2 region. The segment at Asp94 to Gly97 is G3. GTP-binding positions include Asp94–Tyr98 and Thr148–Asp151. The G4 stretch occupies residues Thr148–Asp151. Positions Cys267–Ser269 are G5.

This sequence belongs to the TRAFAC class translation factor GTPase superfamily. Classic translation factor GTPase family. EF-G/EF-2 subfamily.

This chain is Elongation factor G-like protein, found in Mycobacterium tuberculosis (strain ATCC 25618 / H37Rv).